Here is a 303-residue protein sequence, read N- to C-terminus: Pseudouridine-5'-phosphate glycosidase (303 aa).

The active-site Proton donor is Glu-23. Substrate contacts are provided by Lys-85 and Val-105. Asp-137 contacts Mn(2+). Substrate is bound at residue 139 to 141; sequence SQD. Lys-158 serves as the catalytic Nucleophile.

The protein belongs to the pseudouridine-5'-phosphate glycosidase family. As to quaternary structure, homotrimer. Requires Mn(2+) as cofactor.

The catalysed reaction is D-ribose 5-phosphate + uracil = psi-UMP + H2O. Its function is as follows. Catalyzes the reversible cleavage of pseudouridine 5'-phosphate (PsiMP) to ribose 5-phosphate and uracil. Functions biologically in the cleavage direction, as part of a pseudouridine degradation pathway. This Myxococcus xanthus (strain DK1622) protein is Pseudouridine-5'-phosphate glycosidase.